Reading from the N-terminus, the 412-residue chain is Sulfhydrogenase 2 subunit alpha (412 aa).

C60, C63, C402, and C405 together coordinate Ni(2+). C63 serves as a coordination point for Fe cation. Residue C405 coordinates Fe cation.

Belongs to the [NiFe]/[NiFeSe] hydrogenase large subunit family. In terms of assembly, dimer of heterotetramer of alpha, beta, gamma and delta subunits. The nickel-containing alpha and delta subunits constitute the hydrogenase activity. The beta and gamma subunits (flavin-containing dimer) constitute the sulfur reductase activity. Ni(2+) is required as a cofactor. Fe cation serves as cofactor.

Its subcellular location is the cytoplasm. It catalyses the reaction H2 + NADP(+) = NADPH + H(+). It carries out the reaction H2 + NAD(+) = NADH + H(+). In terms of biological role, part of a bifunctional enzyme complex that functions as a hydrogen-evolving hydrogenase with sulfur-reducing activity. May play a role in hydrogen cycling during fermentative growth. Activity exhibited with NAD in addition to NADPH. The alpha and delta subunits form the hydrogenase component that catalyzes the reduction of protons to evolve hydrogen. In Pyrococcus furiosus (strain ATCC 43587 / DSM 3638 / JCM 8422 / Vc1), this protein is Sulfhydrogenase 2 subunit alpha.